The primary structure comprises 187 residues: Inner membrane-spanning protein YciB (187 aa).

Transmembrane regions (helical) follow at residues 22–42, 50–70, 80–100, 118–138, and 148–168; these read IYVA…VTYA, MQLI…FFHD, IIYV…KSVV, INWA…YIAY, and FKVF…GVYI.

Belongs to the YciB family.

The protein localises to the cell inner membrane. Plays a role in cell envelope biogenesis, maintenance of cell envelope integrity and membrane homeostasis. In Vibrio parahaemolyticus serotype O3:K6 (strain RIMD 2210633), this protein is Inner membrane-spanning protein YciB.